A 122-amino-acid chain; its full sequence is UPF0102 protein CE1920 (122 aa).

It belongs to the UPF0102 family.

In Corynebacterium efficiens (strain DSM 44549 / YS-314 / AJ 12310 / JCM 11189 / NBRC 100395), this protein is UPF0102 protein CE1920.